The sequence spans 68 residues: Large ribosomal subunit protein bL33c (68 aa).

Belongs to the bacterial ribosomal protein bL33 family.

It is found in the plastid. This chain is Large ribosomal subunit protein bL33c, found in Cuscuta exaltata (Tall dodder).